The chain runs to 368 residues: Glutamyl-tRNA reductase (368 aa).

Substrate-binding positions include 43–46 (TCHR), S89, 94–96 (EHQ), and Q100. Residue C44 is the Nucleophile of the active site. 164-169 (GTGMMG) provides a ligand contact to NADP(+).

Belongs to the glutamyl-tRNA reductase family. As to quaternary structure, homodimer.

It catalyses the reaction (S)-4-amino-5-oxopentanoate + tRNA(Glu) + NADP(+) = L-glutamyl-tRNA(Glu) + NADPH + H(+). Its pathway is porphyrin-containing compound metabolism; protoporphyrin-IX biosynthesis; 5-aminolevulinate from L-glutamyl-tRNA(Glu): step 1/2. Catalyzes the NADPH-dependent reduction of glutamyl-tRNA(Glu) to glutamate 1-semialdehyde (GSA). The protein is Glutamyl-tRNA reductase of Thermosipho melanesiensis (strain DSM 12029 / CIP 104789 / BI429).